Consider the following 480-residue polypeptide: Sestrin-2 (480 aa).

N-acetylmethionine is present on M1. Residues 20-45 (PGGVGDSGPGEEQRESRARRGPRGPS) form a disordered region. The interval 66–239 (GLEALMSSGR…APTPPSEQSS (174 aa)) is N-terminal domain; mediates the alkylhydroperoxide reductase activity. C125 functions as the Cysteine sulfenic acid (-SOH) intermediate in the catalytic mechanism. K175 participates in a covalent cross-link: Glycyl lysine isopeptide (Lys-Gly) (interchain with G-Cter in ubiquitin). 2 disordered regions span residues 222–252 (ADGSPAPQAPTPPSEQSSPPSRDPLNNSGGF) and 272–291 (LLRDEGTSQEEMESRFELEK). The residue at position 249 (S249) is a Phosphoserine. Positions 308–480 (PHPDMLCFVE…ALRAITRYMT (173 aa)) are C-terminal domain; mediates TORC1 regulation. L-leucine-binding positions include 374–377 (TYNT), T386, and E451.

Belongs to the sestrin family. As to quaternary structure, interacts with the GATOR2 complex which is composed of MIOS, SEC13, SEH1L, WDR24 and WDR59; the interaction is negatively regulated by leucine. Conveys leucine availability via direct interaction with SEH1L and WDR24 components of the GATOR2 complex. Interacts with RRAGA, RRAGB, RRAGC and RRAGD; may function as a guanine nucleotide dissociation inhibitor for RRAGs and regulate them. May interact with the TORC2 complex. Interacts with KEAP1, RBX1, SQSTM and ULK1; to regulate the degradation of KEAP1. May also associate with the complex composed of TSC1, TSC2 and the AMP-responsive protein kinase/AMPK to regulate TORC1 signaling. May interact with PRDX1. Post-translationally, phosphorylated by ULK1 at multiple sites. In terms of processing, ubiquitinated at Lys-175 by RNF167 via 'Lys-63'-linked polyubiquitination in response to leucine deprivation: ubiquitination promotes SESN2-interaction with the GATOR2 complex, leading to inhibit the TORC1 signaling pathway. Deubiquitinated at Lys-175 by STAMBPL1, promoting the TORC1 signaling pathway. Ubiquitinated by RNF186; ubiquitination mediates proteasomal degradation. As to expression, widely expressed.

The protein resides in the cytoplasm. The catalysed reaction is a hydroperoxide + L-cysteinyl-[protein] = S-hydroxy-L-cysteinyl-[protein] + an alcohol. In terms of biological role, functions as an intracellular leucine sensor that negatively regulates the mTORC1 signaling pathway through the GATOR complex. In absence of leucine, binds the GATOR subcomplex GATOR2 and prevents mTORC1 signaling. Binding of leucine to SESN2 disrupts its interaction with GATOR2 thereby activating the TORC1 signaling pathway. This stress-inducible metabolic regulator also plays a role in protection against oxidative and genotoxic stresses. May negatively regulate protein translation in response to endoplasmic reticulum stress, via mTORC1. May positively regulate the transcription by NFE2L2 of genes involved in the response to oxidative stress by facilitating the SQSTM1-mediated autophagic degradation of KEAP1. May also mediate TP53 inhibition of TORC1 signaling upon genotoxic stress. Moreover, may prevent the accumulation of reactive oxygen species (ROS) through the alkylhydroperoxide reductase activity born by the N-terminal domain of the protein. Was originally reported to contribute to oxidative stress resistance by reducing PRDX1. However, this could not be confirmed. The protein is Sestrin-2 of Homo sapiens (Human).